The chain runs to 352 residues: Divinyl chlorophyll a/b light-harvesting protein PcbB (352 aa).

6 consecutive transmembrane segments (helical) span residues 27-47 (FIAAHAAHAGLMMFWAGAFTL), 89-109 (CTVIAVLHLIFSGVLGAGGIL), 142-162 (FILGHHLIFLGLANIQFVEWA), 203-223 (VMGGHAFLAFFQIIGGAFHII), 243-263 (AVLSYSLAGVGYCALVAAFWS), and 307-327 (LANVHFYLGFFFIQGHLWHAL).

This sequence belongs to the PsbB/PsbC family. IsiA/Pcb subfamily. The antenna complex consists of divinyl chlorophylls (a and b) and divinyl chlorophyll a/b binding proteins and binds more divinyl chlorophyll b than does the antenna complex from high-light-adapted Prochlorococcus. Divinyl chlorophyll a serves as cofactor. Requires divinyl chlorophyll b as cofactor.

It localises to the cellular thylakoid membrane. Its function is as follows. The antenna complex functions as a light receptor, it captures and delivers excitation energy to photosystems II and I. The Prochlorales pcb genes are not related to higher plant LHCs. The chain is Divinyl chlorophyll a/b light-harvesting protein PcbB (pcbB) from Prochlorococcus marinus (strain NATL2A).